A 364-amino-acid polypeptide reads, in one-letter code: 3-dehydroquinate synthase (364 aa).

NAD(+) is bound by residues 75-80 (DGEQYK), 109-113 (GVIGD), 133-134 (TT), Lys-146, Lys-155, and 173-176 (TLDT). Zn(2+) is bound by residues Glu-188, His-251, and His-268.

The protein belongs to the sugar phosphate cyclases superfamily. Dehydroquinate synthase family. Co(2+) is required as a cofactor. Requires Zn(2+) as cofactor. It depends on NAD(+) as a cofactor.

It localises to the cytoplasm. The catalysed reaction is 7-phospho-2-dehydro-3-deoxy-D-arabino-heptonate = 3-dehydroquinate + phosphate. Its pathway is metabolic intermediate biosynthesis; chorismate biosynthesis; chorismate from D-erythrose 4-phosphate and phosphoenolpyruvate: step 2/7. In terms of biological role, catalyzes the conversion of 3-deoxy-D-arabino-heptulosonate 7-phosphate (DAHP) to dehydroquinate (DHQ). The chain is 3-dehydroquinate synthase from Dechloromonas aromatica (strain RCB).